Here is a 77-residue protein sequence, read N- to C-terminus: Translation initiation factor IF-1, chloroplastic (77 aa).

The region spanning Met-1–Arg-71 is the S1-like domain.

The protein belongs to the IF-1 family. Component of the 30S ribosomal translation pre-initiation complex which assembles on the 30S ribosome in the order IF-2 and IF-3, IF-1 and N-formylmethionyl-tRNA(fMet); mRNA recruitment can occur at any time during PIC assembly.

Its subcellular location is the plastid. The protein resides in the chloroplast. Its function is as follows. One of the essential components for the initiation of protein synthesis. Stabilizes the binding of IF-2 and IF-3 on the 30S subunit to which N-formylmethionyl-tRNA(fMet) subsequently binds. Helps modulate mRNA selection, yielding the 30S pre-initiation complex (PIC). Upon addition of the 50S ribosomal subunit IF-1, IF-2 and IF-3 are released leaving the mature 70S translation initiation complex. This chain is Translation initiation factor IF-1, chloroplastic, found in Garrya elliptica (Wavyleaf silktassel).